Reading from the N-terminus, the 480-residue chain is MAVLGVQLVVTLFTATLMHRLAPHCSFARWLLCNGSLFRYIHPSEEELRALSGKLRPRVRKERWANGLHDEKPLSVPRDAHFQLQTCPLTAVDALVLRFFLEYQWFVDFAVYSVGVYLFTEAYYFVLGPVQETNIAVFWCLLTLAFSLKVFLMVTRLYFSTKEGGERSVCLSFAFLFLLLAMLVQVVREETLELGLEPGLASMTQHLEPILKKQDWDWTLPVIKLAIRLGLAVLGSLLGAFLIFPGLRLAQTHQDALTLSADRPLLQLLLHTSFLSPLCTLWLWTKPVARDFLYQAPTRNMTFSVPSEGAFDSLRLWVLVALCLLRLAVTRPHLQAYLCLAKARVEQLRKEAGRIEAREIQQRVVRVYCYVTVVSLQYLTPLILTLHCTLLLKTLGGYSWALSSTPPPLAPSQPSEALIPVDPAGDEAQQTAAQVAGILGGLLTPLFLRGMLAYIIWWTAACQLLSSLFGLYFHQHLAAS.

A signal peptide spans 1–28 (MAVLGVQLVVTLFTATLMHRLAPHCSFA). The Extracellular segment spans residues 29 to 98 (RWLLCNGSLF…LTAVDALVLR (70 aa)). Asn-34 is a glycosylation site (N-linked (GlcNAc...) asparagine). Residues 99-119 (FFLEYQWFVDFAVYSVGVYLF) traverse the membrane as a helical segment. The Cytoplasmic segment spans residues 120–134 (TEAYYFVLGPVQETN). A helical transmembrane segment spans residues 135 to 155 (IAVFWCLLTLAFSLKVFLMVT). The Extracellular segment spans residues 156–166 (RLYFSTKEGGE). Residues 167–187 (RSVCLSFAFLFLLLAMLVQVV) traverse the membrane as a helical segment. Over 188 to 224 (REETLELGLEPGLASMTQHLEPILKKQDWDWTLPVIK) the chain is Cytoplasmic. A helical transmembrane segment spans residues 225-245 (LAIRLGLAVLGSLLGAFLIFP). Residues 246-263 (GLRLAQTHQDALTLSADR) lie on the Extracellular side of the membrane. Residues 264 to 284 (PLLQLLLHTSFLSPLCTLWLW) traverse the membrane as a helical segment. The Cytoplasmic segment spans residues 285–304 (TKPVARDFLYQAPTRNMTFS). Residues 305-325 (VPSEGAFDSLRLWVLVALCLL) traverse the membrane as a helical segment. Topologically, residues 326–370 (RLAVTRPHLQAYLCLAKARVEQLRKEAGRIEAREIQQRVVRVYCY) are extracellular. The chain crosses the membrane as a helical span at residues 371-391 (VTVVSLQYLTPLILTLHCTLL). The Cytoplasmic portion of the chain corresponds to 392–450 (LKTLGGYSWALSSTPPPLAPSQPSEALIPVDPAGDEAQQTAAQVAGILGGLLTPLFLRG). A helical transmembrane segment spans residues 451-473 (MLAYIIWWTAACQLLSSLFGLYF). The Extracellular portion of the chain corresponds to 474–480 (HQHLAAS).

This sequence belongs to the TMEM161 family.

The protein resides in the membrane. Its function is as follows. May play a role in protection against oxidative stress. Overexpression leads to reduced levels of oxidant-induced DNA damage and apoptosis. The polypeptide is Transmembrane protein 161A (Tmem161a) (Mus musculus (Mouse)).